The primary structure comprises 349 residues: Probable dual-specificity RNA methyltransferase RlmN (349 aa).

The active-site Proton acceptor is E94. The 222-residue stretch at 100-321 (DEDRATLCVS…TQHGVFATIR (222 aa)) folds into the Radical SAM core domain. The cysteines at positions 107 and 332 are disulfide-linked. Residues C114, C118, and C121 each coordinate [4Fe-4S] cluster. S-adenosyl-L-methionine-binding positions include 159–160 (GE), S191, 213–215 (SMH), and H289. Residue C332 is the S-methylcysteine intermediate of the active site.

Belongs to the radical SAM superfamily. RlmN family. [4Fe-4S] cluster serves as cofactor.

It is found in the cytoplasm. The enzyme catalyses adenosine(2503) in 23S rRNA + 2 reduced [2Fe-2S]-[ferredoxin] + 2 S-adenosyl-L-methionine = 2-methyladenosine(2503) in 23S rRNA + 5'-deoxyadenosine + L-methionine + 2 oxidized [2Fe-2S]-[ferredoxin] + S-adenosyl-L-homocysteine. It catalyses the reaction adenosine(37) in tRNA + 2 reduced [2Fe-2S]-[ferredoxin] + 2 S-adenosyl-L-methionine = 2-methyladenosine(37) in tRNA + 5'-deoxyadenosine + L-methionine + 2 oxidized [2Fe-2S]-[ferredoxin] + S-adenosyl-L-homocysteine. In terms of biological role, specifically methylates position 2 of adenine 2503 in 23S rRNA and position 2 of adenine 37 in tRNAs. The protein is Probable dual-specificity RNA methyltransferase RlmN of Phocaeicola vulgatus (strain ATCC 8482 / DSM 1447 / JCM 5826 / CCUG 4940 / NBRC 14291 / NCTC 11154) (Bacteroides vulgatus).